Here is a 344-residue protein sequence, read N- to C-terminus: Ribosomal RNA large subunit methyltransferase Cfr (344 aa).

Catalysis depends on Glu90, which acts as the Proton acceptor. Residues 97-330 (KQGWESFCIS…ATVRTQFGSE (234 aa)) form the Radical SAM core domain. Cysteines 104 and 335 form a disulfide. The [4Fe-4S] cluster site is built by Cys111, Cys115, and Cys118. Residues 157–158 (GE), Ser188, 211–213 (SLH), and Asn292 each bind S-adenosyl-L-methionine. Catalysis depends on Cys335, which acts as the S-methylcysteine intermediate.

It belongs to the radical SAM superfamily. RlmN family. Cfr subfamily. It depends on [4Fe-4S] cluster as a cofactor.

It localises to the cytoplasm. It catalyses the reaction adenosine(2503) in 23S rRNA + 2 reduced [2Fe-2S]-[ferredoxin] + 2 S-adenosyl-L-methionine = 8-methyladenosine(2503) in 23S rRNA + 5'-deoxyadenosine + L-methionine + 2 oxidized [2Fe-2S]-[ferredoxin] + S-adenosyl-L-homocysteine. Functionally, specifically methylates position 8 of adenine 2503 in 23S rRNA. Confers resistance to some classes of antibiotics. This chain is Ribosomal RNA large subunit methyltransferase Cfr, found in Clostridium botulinum (strain Okra / Type B1).